The primary structure comprises 547 residues: Cilia- and flagella- associated protein 210 (547 aa).

3 coiled-coil regions span residues Glu-50–Ala-131, Val-183–Asn-251, and Ile-342–Lys-405. The segment at Lys-214 to Met-237 is disordered.

In terms of assembly, microtubule inner protein component of sperm flagellar doublet microtubules.

It localises to the cytoplasm. The protein localises to the cytoskeleton. Its subcellular location is the cilium axoneme. The protein resides in the flagellum axoneme. Its function is as follows. Microtubule inner protein (MIP) part of the dynein-decorated doublet microtubules (DMTs) in cilia axoneme, which is required for motile cilia beating. This chain is Cilia- and flagella- associated protein 210 (Cfap210), found in Mus musculus (Mouse).